The sequence spans 362 residues: Homeobox-leucine zipper protein HOX11 (362 aa).

Residues 27–45 (REEAAEAGRRDHEVRRELE) show a composition bias toward basic and acidic residues. The interval 27–179 (REEAAEAGRR…DDGGSARKKL (153 aa)) is disordered. Positions 64–75 (LTLLPMVPGLGL) are enriched in low complexity. Residues 126–135 (LSSSPNNSAG) are compositionally biased toward polar residues. Residues 145-160 (HGLGGNDAAPGGGGGD) show a composition bias toward gly residues. Positions 174 to 233 (SARKKLRLSKEQSAFLEESFKEHSTLNPKQKLALAKQLNLRPRQVEVWFQNRRARTKLKQ) form a DNA-binding region, homeobox. The segment at 232–276 (KQTEVDCEYLKRCCETLTEENRRLQKELAELRALKTVHPFYMHLP) is leucine-zipper. The tract at residues 301 to 330 (AATSSTAAPPAAPSSGGIAATSSSAAAAAA) is disordered.

It belongs to the HD-ZIP homeobox family. Class II subfamily. As to expression, expressed in stems, leaf sheaths and blades and panicles.

Its subcellular location is the nucleus. Functionally, probable transcription factor. The polypeptide is Homeobox-leucine zipper protein HOX11 (HOX11) (Oryza sativa subsp. japonica (Rice)).